We begin with the raw amino-acid sequence, 516 residues long: Membrane-bound transcription factor site-2 protease (516 aa).

Residues 1–3 lie on the Cytoplasmic side of the membrane; the sequence is MIP. A helical membrane pass occupies residues 4–24; sequence VSLVVVVVGGWTAVYLTDLVL. The Lumenal portion of the chain corresponds to 25 to 74; it reads KSSVYFKHSYEDWLENNGLSISPFHIRWQTAVFNRAFYSWGRRKARMLYQ. 2 helical membrane-spanning segments follow: residues 75-95 and 96-107; these read WFNF…FLLG and KTLIQTLGQMMA. Residues 108–141 lie on the Lumenal side of the membrane; that stretch reads DSSYSSSSSSSSHSSSSSSSSSSSSSLYNEQVLQ. A helical transmembrane segment spans residues 142–166; the sequence is VVVPGINLPVNQLTYFFAAVLISGV. His168 contributes to the Zn(2+) binding site. Residue Glu169 is part of the active site. Helical transmembrane passes span 171 to 183, 184 to 206, and 226 to 248; these read GHGI…QVRF, NGFG…TTHL, and FILA…PFYY. His172 is a binding site for Zn(2+). Over 249 to 443 the chain is Lumenal; sequence TGVGVLITEV…LPVVVETFVK (195 aa). The N-linked (GlcNAc...) asparagine glycan is linked to Asn334. The next 2 helical transmembrane spans lie at 444-461 and 462-473; these read YLIS…VPCF and ALDGQWILNSFL. Over 474–489 the chain is Lumenal; it reads DATLTSVIGDNDVKDL. Residues 490–510 form a helical membrane-spanning segment; that stretch reads IGFFILLGGSILLAANVALGL. Topologically, residues 511–516 are cytoplasmic; it reads WMVTAR.

This sequence belongs to the peptidase M50A family. It depends on Zn(2+) as a cofactor.

The protein localises to the membrane. The protein resides in the cytoplasm. Its subcellular location is the golgi apparatus membrane. The catalysed reaction is Cleaves several transcription factors that are type-2 transmembrane proteins within membrane-spanning domains. Known substrates include sterol regulatory element-binding protein (SREBP) -1, SREBP-2 and forms of the transcriptional activator ATF6. SREBP-2 is cleaved at the site 477-DRSRILL-|-CVLTFLCLSFNPLTSLLQWGGA-505. The residues Asn-Pro, 11 residues distal to the site of cleavage in the membrane-spanning domain, are important for cleavage by S2P endopeptidase. Replacement of either of these residues does not prevent cleavage, but there is no cleavage if both of these residues are replaced.. Functionally, zinc metalloprotease that mediates intramembrane proteolysis of proteins such as ATF6, ATF6B, SREBF1/SREBP1 and SREBF2/SREBP2. Catalyzes the second step in the proteolytic activation of the sterol regulatory element-binding proteins (SREBPs) SREBF1/SREBP1 and SREBF2/SREBP2: cleaves SREBPs within the first transmembrane segment, thereby releasing the N-terminal segment with a portion of the transmembrane segment attached. Mature N-terminal SREBP fragments shuttle to the nucleus and activate gene transcription. Also mediates the second step in the proteolytic activation of the cyclic AMP-dependent transcription factor ATF-6 (ATF6 and ATF6B). Involved in intramembrane proteolysis during bone formation. In astrocytes and osteoblasts, upon DNA damage and ER stress, mediates the second step of the regulated intramembrane proteolytic activation of the transcription factor CREB3L1, leading to the inhibition of cell-cycle progression. The chain is Membrane-bound transcription factor site-2 protease from Bos taurus (Bovine).